Consider the following 31-residue polypeptide: Photosystem II reaction center protein Psb30 (31 aa).

A helical transmembrane segment spans residues 5–25 (IQLTSLLLIVIAGPLVIALLF).

It belongs to the Psb30/Ycf12 family. PSII is composed of 1 copy each of membrane proteins PsbA, PsbB, PsbC, PsbD, PsbE, PsbF, PsbH, PsbI, PsbJ, PsbK, PsbL, PsbM, PsbT, PsbX, PsbY, PsbZ, Psb30/Ycf12, peripheral proteins of the oxygen-evolving complex and a large number of cofactors. It forms dimeric complexes.

It localises to the plastid. The protein localises to the chloroplast thylakoid membrane. A core subunit of photosystem II (PSII), probably helps stabilize the reaction center. This is Photosystem II reaction center protein Psb30 from Phacus acuminatus.